Here is a 343-residue protein sequence, read N- to C-terminus: Small ribosomal subunit biogenesis GTPase RsgA (343 aa).

The CP-type G domain maps to 116–275 (RGQLKPVAAN…LIDSPGIREF (160 aa)). Residues 163 to 166 (NKAD) and 217 to 225 (GQSGVGKSS) contribute to the GTP site. Zn(2+) contacts are provided by Cys299, Cys304, His306, and Cys312.

Belongs to the TRAFAC class YlqF/YawG GTPase family. RsgA subfamily. In terms of assembly, monomer. Associates with 30S ribosomal subunit, binds 16S rRNA. The cofactor is Zn(2+).

It is found in the cytoplasm. Its function is as follows. One of several proteins that assist in the late maturation steps of the functional core of the 30S ribosomal subunit. Helps release RbfA from mature subunits. May play a role in the assembly of ribosomal proteins into the subunit. Circularly permuted GTPase that catalyzes slow GTP hydrolysis, GTPase activity is stimulated by the 30S ribosomal subunit. The sequence is that of Small ribosomal subunit biogenesis GTPase RsgA from Pseudomonas syringae pv. tomato (strain ATCC BAA-871 / DC3000).